The following is a 220-amino-acid chain: Nucleolar protein 3 (220 aa).

Glycine 2 carries the N-myristoyl glycine lipid modification. Residues valine 4–histidine 95 enclose the CARD domain. Residues valine 20 to glutamate 70 form an essential for interaction with BAX region. Positions glycine 111–serine 220 are disordered. Position 149 is a phosphothreonine; by CK2 (threonine 149). A compositionally biased stretch (acidic residues) spans glutamate 152 to serine 220.

Oligomerizes (via CARD doamin). Interacts (via CARD domain) with CASP2; inhibits CASP2 activity in a phosphorylation-dependent manner. Interacts with CASP8; decreases CASP8 activity in a mitochondria localization- and phosphorylation-dependent manner and this interaction is dissociated by calcium. Interacts with TFPT; translocates NOL3 into the nucleus and negatively regulated TFPT-induced cell death. Interacts directly (via CARD domain) with FAS and FADD (via DED domain); inhibits death-inducing signaling complex (DISC) assembly by inhibiting the increase in FAS-FADD binding induced by FAS activation. Interacts (via CARD domain) with BAX (via a C-terminal 33 residues); inhibits BAX activation and translocation and consequently cytochrome c release from mitochondria. Interacts with PPM1G; may dephosphorylate NOL3. Interacts (via CARD domain) with BBC3 (via BH3 domain); preventing the association of BBC3 with BCL2 and resulting in activation of CASP8. Interacts (via CARD domain) with BAD(via BH3 domain); preventing the association of BAD with BCL2. Interacts directly (via CARD domain) with TNFRSF1A; inhibits TNF-signaling pathway. Phosphorylation at Thr-149 is required for its antiapoptotic effect by blocking death-inducing signaling complex death-inducing signaling complex (DISC) activity through the control of interaction with CASP8. Phosphorylation at Thr-149 results in translocation to mitochondria and this translocation enables the binding to CASP8. Dephosphorylated at Thr-149 by calcineurin; doesn't inhibit the association between FADD and CASP8 and the consequent apoptosis. Post-translationally, polyubiquitinated by MDM2; promoting proteasomal-dependent degradation in response to apoptotic stimuli.

It localises to the cytoplasm. Its subcellular location is the mitochondrion. It is found in the sarcoplasmic reticulum. The protein resides in the membrane. Apoptosis repressor that blocks multiple modes of cell death. Inhibits extrinsic apoptotic pathways through two different ways. Firstly by interacting with FAS and FADD upon FAS activation blocking death-inducing signaling complex (DISC) assembly. Secondly by interacting with CASP8 in a mitochondria localization- and phosphorylation-dependent manner, limiting the amount of soluble CASP8 available for DISC-mediated activation. Inhibits intrinsic apoptotic pathway in response to a wide range of stresses, through its interaction with BAX resulting in BAX inactivation, preventing mitochondrial dysfunction and release of pro-apoptotic factors. Inhibits calcium-mediated cell death by functioning as a cytosolic calcium buffer, dissociating its interaction with CASP8 and maintaining calcium homeostasis. Negatively regulates oxidative stress-induced apoptosis by phosphorylation-dependent suppression of the mitochondria-mediated intrinsic pathway, by blocking CASP2 activation and BAX translocation. Negatively regulates hypoxia-induced apoptosis in part by inhibiting the release of cytochrome c from mitochondria in a caspase-independent manner. Also inhibits TNF-induced necrosis by preventing TNF-signaling pathway through TNFRSF1A interaction abrogating the recruitment of RIPK1 to complex I. Finally through its role as apoptosis repressor, promotes vascular remodeling through inhibition of apoptosis and stimulation of proliferation, in response to hypoxia. Inhibits too myoblast differentiation through caspase inhibition. This chain is Nucleolar protein 3 (Nol3), found in Mus musculus (Mouse).